Consider the following 226-residue polypeptide: Matrix protein (226 aa).

Residues 2–4 carry the dynamin binding motif; it reads KSL. The PPXY motif signature appears at 28–31; sequence PPSY. Positions 40–43 match the PTAP/PSAP motif motif; sequence PSAP.

This sequence belongs to the vesiculoviruses matrix protein family. In terms of assembly, homomultimer. Interacts with viral nucleocapsid; this interaction contributes to the virion assembly. Interacts with the viral envelope glycoprotein; this interaction contributes to the virion assembly. Interacts with host RAE1-NUP98 complex. Interacts with host NEDD4 and TSG101. Interacts with host dynamin. Interacts with host NDUFAF4; the interaction inhibits viral propagation and is independent of interferon activation. Interacts with host GTF2H5; the interaction may inhibit host transcription. In terms of processing, phosphorylated by host.

It localises to the virion. The protein localises to the host endomembrane system. It is found in the host nucleus membrane. The protein resides in the host nucleus. Its subcellular location is the host cytoplasm. Functionally, forms a double layer around the helical nucleocapsid, the inner matrix layer binding to the N helix and the outer matrix layer binding to the envelope glycoprotein. Plays a major role in assembly and budding of virion, by recruiting cellular partners of the ESCRT complexes that play a key role in releasing the budding particle from the host membrane. Condensates the ribonucleocapsid core during virus assembly. Inhibits the host mRNA nuclear export thereby inducing the shut off of cellular transcription and preventing the interferon signaling and the establishment of antiviral state in infected cells. This shutoff presumably inhibits interferon signaling and thus establishment of antiviral state in virus infected cells. Induces cell-rounding, cytoskeleton disorganization and apoptosis in infected cell. Inhibits host transcription, possibly through interaction with host DNA repair factor IIH/TFIIH GTF2H5 subunit. The polypeptide is Matrix protein (M) (Isfahan virus (ISFV)).